The sequence spans 560 residues: Secreted RxLR effector protein 142 (560 aa).

Residues 1 to 22 form the signal peptide; the sequence is MRRAYFVAIALLVAAGGKTAAG. Disordered stretches follow at residues 48 to 73 and 354 to 377; these read QSQNLQESRDPKDDLKLSAGNEERTP and INRPAPSGPSTNGATTSNGGLNNQ. Residues 54–72 show a composition bias toward basic and acidic residues; that stretch reads ESRDPKDDLKLSAGNEERT. Positions 56–71 match the RxLR-dEER motif; the sequence is RDPKDDLKLSAGNEER. Positions 361 to 377 are enriched in polar residues; the sequence is GPSTNGATTSNGGLNNQ.

It belongs to the RxLR effector family.

It localises to the secreted. The protein localises to the host nucleus. Its function is as follows. Secreted effector that completely suppresses the host cell death induced by cell death-inducing proteins. The polypeptide is Secreted RxLR effector protein 142 (Plasmopara viticola (Downy mildew of grapevine)).